The primary structure comprises 423 residues: D-tagatose-1,6-bisphosphate aldolase subunit GatZ (423 aa).

It belongs to the GatZ/KbaZ family. GatZ subfamily. As to quaternary structure, forms a complex with GatY.

It functions in the pathway carbohydrate metabolism; D-tagatose 6-phosphate degradation; D-glyceraldehyde 3-phosphate and glycerone phosphate from D-tagatose 6-phosphate: step 2/2. Functionally, component of the tagatose-1,6-bisphosphate aldolase GatYZ that is required for full activity and stability of the Y subunit. Could have a chaperone-like function for the proper and stable folding of GatY. When expressed alone, GatZ does not show any aldolase activity. Is involved in the catabolism of galactitol. This Salmonella newport (strain SL254) protein is D-tagatose-1,6-bisphosphate aldolase subunit GatZ.